Here is an 88-residue protein sequence, read N- to C-terminus: MAVHIRLARAGTKKTPFYRIVVADQRSPRGGRFIERLGTYDPRRTEIRLDVPRVRHWISNGAQPTHTVALLLKHPGLAQAAAPADAAK.

It belongs to the bacterial ribosomal protein bS16 family.

This chain is Small ribosomal subunit protein bS16, found in Sorangium cellulosum (strain So ce56) (Polyangium cellulosum (strain So ce56)).